A 644-amino-acid polypeptide reads, in one-letter code: Macrolide export ATP-binding/permease protein MacB (644 aa).

At 1–268 (MNIIEIKQLN…SAIVAHKMRS (268 aa)) the chain is on the cytoplasmic side. Residues 4–242 (IEIKQLNRYF…VKNPSVFKGR (239 aa)) enclose the ABC transporter domain. An ATP-binding site is contributed by 40–47 (GQSGSGKS). The helical transmembrane segment at 269–289 (LLTMLGIIIGITSVVSVVALG) threads the bilayer. Topologically, residues 290–523 (NGSQQKILEN…TGTMKLLISS (234 aa)) are periplasmic. Residues 524–544 (IAFISLIVGGIGVMNIMLVSV) traverse the membrane as a helical segment. At 545–573 (TERTKEIGVRMAIGARQINILQQFLIEAV) the chain is on the cytoplasmic side. A helical transmembrane segment spans residues 574–594 (LICLIGGVAGILLSVLIGVLF). Topologically, residues 595-607 (NSFITDFSMDFST) are periplasmic. The chain crosses the membrane as a helical span at residues 608–628 (ASIVTAVLFSTLIGVLFGYMP). The Cytoplasmic portion of the chain corresponds to 629-644 (AKKAAELNPITALAQE).

The protein belongs to the ABC transporter superfamily. Macrolide exporter (TC 3.A.1.122) family. Homodimer. Part of the tripartite efflux system MacAB-TdeA, which is composed of an inner membrane transporter, MacB, a periplasmic membrane fusion protein, MacA, and an outer membrane component, TdeA. The complex forms a large protein conduit and can translocate molecules across both the inner and outer membranes. Interacts with MacA.

The protein resides in the cell inner membrane. Functionally, part of the tripartite efflux system MacAB-TdeA. MacB is a non-canonical ABC transporter that contains transmembrane domains (TMD), which form a pore in the inner membrane, and an ATP-binding domain (NBD), which is responsible for energy generation. Confers resistance against macrolides. This is Macrolide export ATP-binding/permease protein MacB from Aggregatibacter actinomycetemcomitans (Actinobacillus actinomycetemcomitans).